The chain runs to 483 residues: GTPase Obg (483 aa).

The Obg domain maps to S2 to V159. Residues A160–R340 enclose the OBG-type G domain. GTP-binding positions include G166–S173, F191–V195, D212–G215, N292–D295, and S321–V323. 2 residues coordinate Mg(2+): S173 and T193. An OCT domain is found at P358–P438.

Belongs to the TRAFAC class OBG-HflX-like GTPase superfamily. OBG GTPase family. Monomer. Mg(2+) is required as a cofactor.

Its subcellular location is the cytoplasm. An essential GTPase which binds GTP, GDP and possibly (p)ppGpp with moderate affinity, with high nucleotide exchange rates and a fairly low GTP hydrolysis rate. Plays a role in control of the cell cycle, stress response, ribosome biogenesis and in those bacteria that undergo differentiation, in morphogenesis control. This is GTPase Obg from Rhodococcus erythropolis (strain PR4 / NBRC 100887).